The following is a 101-amino-acid chain: MGVLGGPSPRLRLYVYDFKEPGGEAERRKLRELLESHGAFRLQYSTYALLAEPEVHARVLRRVVARVDFEEGDSLIVVPMCRRCLRVARWVDAEGVRGLRF.

D17 is a binding site for Mg(2+).

The protein belongs to the CRISPR-associated endoribonuclease Cas2 protein family. In terms of assembly, homodimer, forms a heterotetramer with a Cas1 homodimer. Requires Mg(2+) as cofactor.

Functionally, CRISPR (clustered regularly interspaced short palindromic repeat), is an adaptive immune system that provides protection against mobile genetic elements (viruses, transposable elements and conjugative plasmids). CRISPR clusters contain sequences complementary to antecedent mobile elements and target invading nucleic acids. CRISPR clusters are transcribed and processed into CRISPR RNA (crRNA). Functions as a ssRNA-specific endoribonuclease. Involved in the integration of spacer DNA into the CRISPR cassette. The sequence is that of CRISPR-associated endoribonuclease Cas2 from Methanopyrus kandleri (strain AV19 / DSM 6324 / JCM 9639 / NBRC 100938).